Reading from the N-terminus, the 101-residue chain is Small ribosomal subunit protein uS14 (101 aa).

This sequence belongs to the universal ribosomal protein uS14 family. As to quaternary structure, part of the 30S ribosomal subunit. Contacts proteins S3 and S10.

In terms of biological role, binds 16S rRNA, required for the assembly of 30S particles and may also be responsible for determining the conformation of the 16S rRNA at the A site. The protein is Small ribosomal subunit protein uS14 of Arthrobacter sp. (strain FB24).